Consider the following 971-residue polypeptide: UPF0182 protein CMS1887 (971 aa).

Helical transmembrane passes span 16–36 (LAIT…FAGF), 56–76 (WGAG…PVFV), 108–128 (LAMF…ASSG), 161–181 (FYHA…LGVL), 205–225 (IQIA…IWLD), 255–275 (TILA…AAIG), and 281–301 (IIGT…YPAI). Positions 687–702 (QDLWTTPNDPTATTEA) are enriched in polar residues. Disordered stretches follow at residues 687–706 (QDLW…GTPA) and 874–924 (GATA…AQDV). Composition is skewed to low complexity over residues 884 to 900 (PTTP…TDGA) and 907 to 921 (STPT…AAPA).

This sequence belongs to the UPF0182 family.

It localises to the cell membrane. The sequence is that of UPF0182 protein CMS1887 from Clavibacter sepedonicus (Clavibacter michiganensis subsp. sepedonicus).